Reading from the N-terminus, the 856-residue chain is DNA mismatch repair protein MutS (856 aa).

ATP is bound at residue 617 to 624 (GPNMGGKS).

Belongs to the DNA mismatch repair MutS family.

Its function is as follows. This protein is involved in the repair of mismatches in DNA. It is possible that it carries out the mismatch recognition step. This protein has a weak ATPase activity. In Psychromonas ingrahamii (strain DSM 17664 / CCUG 51855 / 37), this protein is DNA mismatch repair protein MutS.